The chain runs to 211 residues: MNKLIDFSKGLVPVILQHAQTDSVLMLGYMNEEAYQKTLKEKKVTFFSRSKQRLWTKGETSGHFQHVESIHLDCDQDAILIKVMPQGPTCHTGSLSCFNSEIESRFKIQALAQTIHQSAKSNQSNSYTQYLLKEGIEKISKKFGEEAFEVVIGAIKHNREEVINETADVMYHLFVLLHSLDIPFSEVEQVLAHRHQKRNNFKGERKKVQEW.

The segment at 1–107 (MNKLIDFSKG…FNSEIESRFK (107 aa)) is phosphoribosyl-AMP cyclohydrolase. The interval 108–211 (IQALAQTIHQ…KGERKKVQEW (104 aa)) is phosphoribosyl-ATP pyrophosphohydrolase.

It in the N-terminal section; belongs to the PRA-CH family. This sequence in the C-terminal section; belongs to the PRA-PH family.

Its subcellular location is the cytoplasm. The catalysed reaction is 1-(5-phospho-beta-D-ribosyl)-ATP + H2O = 1-(5-phospho-beta-D-ribosyl)-5'-AMP + diphosphate + H(+). The enzyme catalyses 1-(5-phospho-beta-D-ribosyl)-5'-AMP + H2O = 1-(5-phospho-beta-D-ribosyl)-5-[(5-phospho-beta-D-ribosylamino)methylideneamino]imidazole-4-carboxamide. The protein operates within amino-acid biosynthesis; L-histidine biosynthesis; L-histidine from 5-phospho-alpha-D-ribose 1-diphosphate: step 2/9. It functions in the pathway amino-acid biosynthesis; L-histidine biosynthesis; L-histidine from 5-phospho-alpha-D-ribose 1-diphosphate: step 3/9. The protein is Histidine biosynthesis bifunctional protein HisIE of Staphylococcus epidermidis (strain ATCC 12228 / FDA PCI 1200).